We begin with the raw amino-acid sequence, 130 residues long: Small ribosomal subunit protein uS11c (130 aa).

The protein belongs to the universal ribosomal protein uS11 family. Part of the 30S ribosomal subunit.

Its subcellular location is the plastid. The protein localises to the chloroplast. This chain is Small ribosomal subunit protein uS11c, found in Mesostigma viride (Green alga).